A 424-amino-acid chain; its full sequence is GTPase Obg (424 aa).

The Obg domain maps to 1-160 (MFDRVEIRIK…YELILELKLI (160 aa)). Positions 161–328 (ADVAIIGYPN…LLDKVAEKLA (168 aa)) constitute an OBG-type G domain. GTP-binding positions include 167–174 (GYPNVGKS), 192–196 (FTTLS), 213–216 (EVPG), 280–283 (NKID), and 309–311 (SAL). Mg(2+) is bound by residues Ser174 and Thr194. The OCT domain maps to 349-424 (PAPKGKMGFH…IITGRLEWYL (76 aa)).

This sequence belongs to the TRAFAC class OBG-HflX-like GTPase superfamily. OBG GTPase family. Monomer. The cofactor is Mg(2+).

The protein localises to the cytoplasm. In terms of biological role, an essential GTPase which binds GTP, GDP and possibly (p)ppGpp with moderate affinity, with high nucleotide exchange rates and a fairly low GTP hydrolysis rate. Plays a role in control of the cell cycle, stress response, ribosome biogenesis and in those bacteria that undergo differentiation, in morphogenesis control. The sequence is that of GTPase Obg from Dehalococcoides mccartyi (strain ATCC BAA-2266 / KCTC 15142 / 195) (Dehalococcoides ethenogenes (strain 195)).